The sequence spans 152 residues: Transcriptional regulator MraZ (152 aa).

SpoVT-AbrB domains follow at residues 5–52 and 81–124; these read ATLV…PLPE and ASEC…DETT.

Belongs to the MraZ family. As to quaternary structure, forms oligomers.

It is found in the cytoplasm. The protein resides in the nucleoid. Functionally, negatively regulates its own expression and that of the subsequent genes in the proximal part of the division and cell wall (dcw) gene cluster. Acts by binding directly to DNA. May also regulate the expression of genes outside the dcw cluster. The protein is Transcriptional regulator MraZ of Shigella flexneri serotype 5b (strain 8401).